The following is a 181-amino-acid chain: Oligoribonuclease (181 aa).

Residues 8-171 (LIWIDLEMTG…LDIQESIAEL (164 aa)) form the Exonuclease domain. Tyr129 is an active-site residue.

It belongs to the oligoribonuclease family.

Its subcellular location is the cytoplasm. 3'-to-5' exoribonuclease specific for small oligoribonucleotides. The polypeptide is Oligoribonuclease (Shewanella amazonensis (strain ATCC BAA-1098 / SB2B)).